The sequence spans 345 residues: Adenine deaminase (345 aa).

The Zn(2+) site is built by His-20, His-22, and His-204. Glu-207 (proton donor) is an active-site residue. Zn(2+) is bound at residue Asp-285. Asp-286 provides a ligand contact to substrate.

The protein belongs to the metallo-dependent hydrolases superfamily. Adenosine and AMP deaminases family. Adenine deaminase type 2 subfamily. Zn(2+) is required as a cofactor.

The enzyme catalyses adenine + H2O + H(+) = hypoxanthine + NH4(+). Functionally, catalyzes the hydrolytic deamination of adenine to hypoxanthine. Plays an important role in the purine salvage pathway and in nitrogen catabolism. This is Adenine deaminase from Ralstonia pickettii (strain 12J).